Reading from the N-terminus, the 321-residue chain is Probable arabinan endo-1,5-alpha-L-arabinosidase A (321 aa).

Residues 1-19 (MYRLLSVASVPLLASLVHG) form the signal peptide. Asp34 functions as the Proton acceptor in the catalytic mechanism. The active-site Proton donor is the Glu200. Residue Asn295 is glycosylated (N-linked (GlcNAc...) asparagine).

This sequence belongs to the glycosyl hydrolase 43 family.

The protein localises to the secreted. The enzyme catalyses Endohydrolysis of (1-&gt;5)-alpha-arabinofuranosidic linkages in (1-&gt;5)-arabinans.. It participates in glycan metabolism; L-arabinan degradation. In terms of biological role, endo-1,5-alpha-L-arabinanase involved in degradation of pectin. Its preferred substrate is linear 1,5-alpha-L-arabinan. The protein is Probable arabinan endo-1,5-alpha-L-arabinosidase A (abnA) of Aspergillus niger (strain ATCC MYA-4892 / CBS 513.88 / FGSC A1513).